A 137-amino-acid chain; its full sequence is Large ribosomal subunit protein uL16 (137 aa).

The protein belongs to the universal ribosomal protein uL16 family. Part of the 50S ribosomal subunit.

In terms of biological role, binds 23S rRNA and is also seen to make contacts with the A and possibly P site tRNAs. This is Large ribosomal subunit protein uL16 from Streptococcus mutans serotype c (strain ATCC 700610 / UA159).